The sequence spans 155 residues: SsrA-binding protein (155 aa).

The protein belongs to the SmpB family.

Its subcellular location is the cytoplasm. Required for rescue of stalled ribosomes mediated by trans-translation. Binds to transfer-messenger RNA (tmRNA), required for stable association of tmRNA with ribosomes. tmRNA and SmpB together mimic tRNA shape, replacing the anticodon stem-loop with SmpB. tmRNA is encoded by the ssrA gene; the 2 termini fold to resemble tRNA(Ala) and it encodes a 'tag peptide', a short internal open reading frame. During trans-translation Ala-aminoacylated tmRNA acts like a tRNA, entering the A-site of stalled ribosomes, displacing the stalled mRNA. The ribosome then switches to translate the ORF on the tmRNA; the nascent peptide is terminated with the 'tag peptide' encoded by the tmRNA and targeted for degradation. The ribosome is freed to recommence translation, which seems to be the essential function of trans-translation. This Clostridium acetobutylicum (strain ATCC 824 / DSM 792 / JCM 1419 / IAM 19013 / LMG 5710 / NBRC 13948 / NRRL B-527 / VKM B-1787 / 2291 / W) protein is SsrA-binding protein.